A 161-amino-acid chain; its full sequence is Nucleotide-binding protein xcc-b100_3818 (161 aa).

This sequence belongs to the YajQ family.

In terms of biological role, nucleotide-binding protein. The chain is Nucleotide-binding protein xcc-b100_3818 from Xanthomonas campestris pv. campestris (strain B100).